Here is a 262-residue protein sequence, read N- to C-terminus: MNILVVKTPEELAEAGYKLIEEVVKTKENPTLGMATGSSPLGIYAEMRKNKLDTSRVTTVNLDEYVNLPHEDKNSYHYFMQEQLFDHLPFKQTYVPNGMASDLEEECKRYEGILAANPVDLQILGIGENGHIGFNEPGTPFNSPTNIVELTESTRQANLRFFEKEEDVPTHAITMGIGSIMKAKQILLVAMGSKKAEAVKELLQGAYSEACPATVLQRHPNVTVIADQEALSLCSEAIADEHRQVFTISDLLSDSRVGETAN.

Catalysis depends on aspartate 63, which acts as the Proton acceptor; for enolization step. The For ring-opening step role is filled by asparagine 129. Histidine 131 functions as the Proton acceptor; for ring-opening step in the catalytic mechanism. Glutamate 136 (for ring-opening step) is an active-site residue.

This sequence belongs to the glucosamine/galactosamine-6-phosphate isomerase family. NagB subfamily.

The catalysed reaction is alpha-D-glucosamine 6-phosphate + H2O = beta-D-fructose 6-phosphate + NH4(+). It participates in amino-sugar metabolism; N-acetylneuraminate degradation; D-fructose 6-phosphate from N-acetylneuraminate: step 5/5. Catalyzes the reversible isomerization-deamination of glucosamine 6-phosphate (GlcN6P) to form fructose 6-phosphate (Fru6P) and ammonium ion. The chain is Glucosamine-6-phosphate deaminase from Bacillus cereus (strain ZK / E33L).